A 125-amino-acid polypeptide reads, in one-letter code: Cu-Zn superoxide dismutase-like protein (125 aa).

An intrachain disulfide couples C52 to C102.

The protein belongs to the Cu-Zn superoxide dismutase family.

It is found in the host cytoplasm. Virion protein with no enzymatic activity. This is Cu-Zn superoxide dismutase-like protein from Bos taurus (Bovine).